The chain runs to 754 residues: tRNA(Met) cytidine acetyltransferase TmcA (754 aa).

The segment at 181–202 (GISFDAAPPRVPTEKDRRSPRR) is disordered. Residues 192-202 (PTEKDRRSPRR) show a composition bias toward basic and acidic residues. Residues Gln212, 236 to 245 (GRGKSSAAGL), and Arg383 contribute to the ATP site. The N-acetyltransferase domain occupies 418 to 603 (VSYRALSPDD…YSALMTRPLS (186 aa)). Residues 529-531 (IAT), 536-542 (RSSGLGS), and Glu568 each bind acetyl-CoA.

This sequence belongs to the RNA cytidine acetyltransferase family. TmcA subfamily.

Its subcellular location is the cytoplasm. It carries out the reaction cytidine(34) in elongator tRNA(Met) + acetyl-CoA + ATP + H2O = N(4)-acetylcytidine(34) in elongator tRNA(Met) + ADP + phosphate + CoA + H(+). Functionally, catalyzes the formation of N(4)-acetylcytidine (ac(4)C) at the wobble position of tRNA(Met), by using acetyl-CoA as an acetyl donor and ATP (or GTP). In Haloferax volcanii (strain ATCC 29605 / DSM 3757 / JCM 8879 / NBRC 14742 / NCIMB 2012 / VKM B-1768 / DS2) (Halobacterium volcanii), this protein is tRNA(Met) cytidine acetyltransferase TmcA.